A 72-amino-acid chain; its full sequence is UPF0154 protein Bcer98_2334 (72 aa).

Residues I3–F23 form a helical membrane-spanning segment.

Belongs to the UPF0154 family.

The protein resides in the cell membrane. The polypeptide is UPF0154 protein Bcer98_2334 (Bacillus cytotoxicus (strain DSM 22905 / CIP 110041 / 391-98 / NVH 391-98)).